We begin with the raw amino-acid sequence, 1048 residues long: Probable histidine kinase 2 (1048 aa).

Topologically, residues 1 to 16 (MREVEEVSKWRRRCCY) are cytoplasmic. Residues 17–37 (FWILFPLAVIATCMTITVVTF) form a helical membrane-spanning segment. Residues 38-336 (CSSTMYMTEV…AMVGVFRRGG (299 aa)) are Extracellular-facing. A helical membrane pass occupies residues 337–357 (VTMVAVACAAAAAATVACVLM). Residues 358–1048 (ARALRRAVAR…AVHGVCKGKN (691 aa)) lie on the Cytoplasmic side of the membrane. The 265-residue stretch at 398–662 (SASHDIRSAL…CFGFNVLLKT (265 aa)) folds into the Histidine kinase domain. At His-401 the chain carries Phosphohistidine; by autocatalysis. The 133-residue stretch at 912–1044 (HVLLVEDTLV…RIVEAVHGVC (133 aa)) folds into the Response regulatory domain. Asp-975 is subject to 4-aspartylphosphate.

Activation probably requires a transfer of a phosphate group between a His in the transmitter domain and an Asp of the receiver domain.

The protein resides in the cell membrane. It carries out the reaction ATP + protein L-histidine = ADP + protein N-phospho-L-histidine.. Functionally, cytokinin receptor related to bacterial two-component regulators. Functions as a histidine kinase and transmits the stress signal to a downstream MAPK cascade. In Oryza sativa subsp. indica (Rice), this protein is Probable histidine kinase 2.